Here is a 337-residue protein sequence, read N- to C-terminus: Probable dual-specificity RNA methyltransferase RlmN (337 aa).

E88 (proton acceptor) is an active-site residue. In terms of domain architecture, Radical SAM core spans 94–322 (SSDRLTVCVS…ASIRRSRGLD (229 aa)). The cysteines at positions 101 and 327 are disulfide-linked. Positions 108, 112, and 115 each coordinate [4Fe-4S] cluster. S-adenosyl-L-methionine-binding positions include 155–156 (GE), S185, 208–210 (SLH), and N284. C327 acts as the S-methylcysteine intermediate in catalysis.

The protein belongs to the radical SAM superfamily. RlmN family. The cofactor is [4Fe-4S] cluster.

The protein localises to the cytoplasm. It carries out the reaction adenosine(2503) in 23S rRNA + 2 reduced [2Fe-2S]-[ferredoxin] + 2 S-adenosyl-L-methionine = 2-methyladenosine(2503) in 23S rRNA + 5'-deoxyadenosine + L-methionine + 2 oxidized [2Fe-2S]-[ferredoxin] + S-adenosyl-L-homocysteine. The catalysed reaction is adenosine(37) in tRNA + 2 reduced [2Fe-2S]-[ferredoxin] + 2 S-adenosyl-L-methionine = 2-methyladenosine(37) in tRNA + 5'-deoxyadenosine + L-methionine + 2 oxidized [2Fe-2S]-[ferredoxin] + S-adenosyl-L-homocysteine. Specifically methylates position 2 of adenine 2503 in 23S rRNA and position 2 of adenine 37 in tRNAs. The chain is Probable dual-specificity RNA methyltransferase RlmN from Thermosynechococcus vestitus (strain NIES-2133 / IAM M-273 / BP-1).